The sequence spans 933 residues: Valine--tRNA ligase (933 aa).

Residues 58-68 (PNVTGSLHMGH) carry the 'HIGH' region motif. Positions 556 to 560 (KMSKS) match the 'KMSKS' region motif. An ATP-binding site is contributed by lysine 559. Coiled coils occupy residues 807–833 (VTKNQNLLNLLKKATQDIQALTRANKV) and 864–933 (EGLV…LGLK).

It belongs to the class-I aminoacyl-tRNA synthetase family. ValS type 1 subfamily. As to quaternary structure, monomer.

The protein resides in the cytoplasm. The enzyme catalyses tRNA(Val) + L-valine + ATP = L-valyl-tRNA(Val) + AMP + diphosphate. Its function is as follows. Catalyzes the attachment of valine to tRNA(Val). As ValRS can inadvertently accommodate and process structurally similar amino acids such as threonine, to avoid such errors, it has a 'posttransfer' editing activity that hydrolyzes mischarged Thr-tRNA(Val) in a tRNA-dependent manner. The chain is Valine--tRNA ligase from Prochlorococcus marinus (strain SARG / CCMP1375 / SS120).